A 466-amino-acid chain; its full sequence is Ribulose bisphosphate carboxylase large chain (466 aa).

Lys5 carries the N6,N6,N6-trimethyllysine modification. Positions 114 and 164 each coordinate substrate. Lys166 (proton acceptor) is an active-site residue. Lys168 provides a ligand contact to substrate. Mg(2+) contacts are provided by Lys192, Asp194, and Glu195. An N6-carboxylysine modification is found at Lys192. His285 (proton acceptor) is an active-site residue. Residues Arg286, His318, and Ser370 each coordinate substrate.

Belongs to the RuBisCO large chain family. Type I subfamily. As to quaternary structure, heterohexadecamer of 8 large chains and 8 small chains; disulfide-linked. The disulfide link is formed within the large subunit homodimers. It depends on Mg(2+) as a cofactor. In terms of processing, the disulfide bond which can form in the large chain dimeric partners within the hexadecamer appears to be associated with oxidative stress and protein turnover.

The protein localises to the plastid. It is found in the chloroplast. It carries out the reaction 2 (2R)-3-phosphoglycerate + 2 H(+) = D-ribulose 1,5-bisphosphate + CO2 + H2O. The enzyme catalyses D-ribulose 1,5-bisphosphate + O2 = 2-phosphoglycolate + (2R)-3-phosphoglycerate + 2 H(+). In terms of biological role, ruBisCO catalyzes two reactions: the carboxylation of D-ribulose 1,5-bisphosphate, the primary event in carbon dioxide fixation, as well as the oxidative fragmentation of the pentose substrate in the photorespiration process. Both reactions occur simultaneously and in competition at the same active site. The protein is Ribulose bisphosphate carboxylase large chain of Caltha palustris (Yellow marsh marigold).